Reading from the N-terminus, the 400-residue chain is uncharacterized protein (400 aa).

Residues 1-31 (MENPIKPVATRSIGIAVVLLVVGIVIGFAVG) form the signal peptide.

Belongs to the bacterial solute-binding protein 1 family. WtpA subfamily.

This is an uncharacterized protein from Thermoplasma acidophilum (strain ATCC 25905 / DSM 1728 / JCM 9062 / NBRC 15155 / AMRC-C165).